The primary structure comprises 245 residues: Phycocyanobilin:ferredoxin oxidoreductase (245 aa).

It belongs to the HY2 family.

The catalysed reaction is (2R,3Z)-phycocyanobilin + 4 oxidized [2Fe-2S]-[ferredoxin] = biliverdin IXalpha + 4 reduced [2Fe-2S]-[ferredoxin] + 4 H(+). In terms of biological role, catalyzes the four-electron reduction of biliverdin IX-alpha (2-electron reduction at both the A and D rings); the reaction proceeds via an isolatable 2-electron intermediate, 181,182-dihydrobiliverdin. In Gloeothece citriformis (strain PCC 7424) (Cyanothece sp. (strain PCC 7424)), this protein is Phycocyanobilin:ferredoxin oxidoreductase.